A 632-amino-acid chain; its full sequence is 2-oxoacid:ferredoxin oxidoreductase subunit alpha (632 aa).

The YPITP motif signature appears at 254–258 (YPITP). Substrate contacts are provided by threonine 257 and arginine 345.

In terms of assembly, heterodimer composed of an alpha and a beta subunit.

It carries out the reaction a 2-oxocarboxylate + 2 oxidized [2Fe-2S]-[ferredoxin] + CoA = an acyl-CoA + 2 reduced [2Fe-2S]-[ferredoxin] + CO2 + H(+). Functionally, catalyzes the coenzyme A-dependent oxidative decarboxylation of different 2-oxoacids such as 2-oxoglutarate, pyruvate and 2-oxobutyrate to form their CoA derivatives. The chain is 2-oxoacid:ferredoxin oxidoreductase subunit alpha from Saccharolobus solfataricus (Sulfolobus solfataricus).